Reading from the N-terminus, the 420-residue chain is Anaerobic glycerol-3-phosphate dehydrogenase subunit B (420 aa).

The protein belongs to the anaerobic G-3-P dehydrogenase subunit B family. As to quaternary structure, composed of a catalytic GlpA/B dimer and of membrane bound GlpC. FMN is required as a cofactor.

It catalyses the reaction a quinone + sn-glycerol 3-phosphate = dihydroxyacetone phosphate + a quinol. It functions in the pathway polyol metabolism; glycerol degradation via glycerol kinase pathway; glycerone phosphate from sn-glycerol 3-phosphate (anaerobic route): step 1/1. Conversion of glycerol 3-phosphate to dihydroxyacetone. Uses fumarate or nitrate as electron acceptor. This chain is Anaerobic glycerol-3-phosphate dehydrogenase subunit B, found in Pectobacterium carotovorum subsp. carotovorum (strain PC1).